We begin with the raw amino-acid sequence, 591 residues long: CTP synthase 1-B (591 aa).

Residues 300 to 554 form the Glutamine amidotransferase type-1 domain; that stretch reads SIALVGKYTK…LASVGRLSQY (255 aa). Active-site for GATase activity residues include Cys-399, His-526, and Glu-528. Positions 562-572 are enriched in basic and acidic residues; the sequence is SPRDTYSDRSE. The segment at 562 to 581 is disordered; sequence SPRDTYSDRSENSSPDAEIA.

This sequence belongs to the CTP synthase family.

It catalyses the reaction UTP + L-glutamine + ATP + H2O = CTP + L-glutamate + ADP + phosphate + 2 H(+). It participates in pyrimidine metabolism; CTP biosynthesis via de novo pathway; CTP from UDP: step 2/2. Its function is as follows. This enzyme is involved in the de novo synthesis of CTP, a precursor of DNA, RNA and phospholipids. Catalyzes the ATP-dependent amination of UTP to CTP with either L-glutamine or ammonia as a source of nitrogen. The chain is CTP synthase 1-B (ctps1-b) from Xenopus laevis (African clawed frog).